The following is a 333-amino-acid chain: Ribosome biogenesis regulatory protein homolog (333 aa).

Disordered regions lie at residues 227-248 and 271-333; these read KANV…VSGE and AAAV…ARKG. Residues 278-295 are compositionally biased toward basic and acidic residues; that stretch reads LREKKEKSERKGAKDQTR. The segment covering 324 to 333 has biased composition (basic residues); that stretch reads GANKAKARKG.

It belongs to the RRS1 family.

It is found in the nucleus. It localises to the nucleolus. In terms of biological role, involved in ribosomal large subunit assembly. The chain is Ribosome biogenesis regulatory protein homolog from Caenorhabditis elegans.